We begin with the raw amino-acid sequence, 41 residues long: Disintegrin viperistatin (41 aa).

4 cysteine pairs are disulfide-bonded: Cys1–Cys10, Cys6–Cys29, Cys7–Cys34, and Cys19–Cys36. Residues 1-41 form the Disintegrin domain; sequence CTTGPCCRQCKLKPAGTTCWKTSRTSHYCTGKSCDCPVYQG. The short motif at 21–23 is the Cell attachment site; atypical (KTS) element; sequence KTS.

Monomer. As to expression, expressed by the venom gland.

The protein localises to the secreted. Potent and highly selective inhibitor of alpha-1/beta-1 (ITGA1/ITGB1) integrin binding to collagen I and IV. Is about 25-fold more potent than obtustatin inhibiting the binding of this integrin to collagen IV. The chain is Disintegrin viperistatin from Daboia palaestinae (Palestine viper).